Reading from the N-terminus, the 630-residue chain is uncharacterized protein (630 aa).

Helical transmembrane passes span 8–28 and 258–278; these read LFNM…ASAV and VDNS…PLVI. Residues 399–426 are disordered; that stretch reads EETSKPTEQPSPADSTSTPAAPEKGAAS. The segment covering 404 to 417 has biased composition (polar residues); sequence PTEQPSPADSTSTP.

It belongs to the peptidase S1C family.

It localises to the cell membrane. This is an uncharacterized protein from Sinorhizobium fredii (strain NBRC 101917 / NGR234).